The sequence spans 55 residues: Conotoxin Cal14.14 (55 aa).

An N-terminal signal peptide occupies residues 1–20; the sequence is MFRLGVFLLTFLLLVSMATS. 2 disulfide bridges follow: Cys-34–Cys-48 and Cys-38–Cys-52.

As to expression, expressed by the venom duct.

The protein resides in the secreted. Probable neurotoxin. The polypeptide is Conotoxin Cal14.14 (Californiconus californicus (California cone)).